Consider the following 361-residue polypeptide: Chorismate synthase (361 aa).

The NADP(+) site is built by arginine 48 and arginine 54. Residues 125–127, 238–239, glycine 278, 293–297, and arginine 319 contribute to the FMN site; these read RSS, NA, and KPTSS.

It belongs to the chorismate synthase family. In terms of assembly, homotetramer. The cofactor is FMNH2.

It carries out the reaction 5-O-(1-carboxyvinyl)-3-phosphoshikimate = chorismate + phosphate. Its pathway is metabolic intermediate biosynthesis; chorismate biosynthesis; chorismate from D-erythrose 4-phosphate and phosphoenolpyruvate: step 7/7. Its function is as follows. Catalyzes the anti-1,4-elimination of the C-3 phosphate and the C-6 proR hydrogen from 5-enolpyruvylshikimate-3-phosphate (EPSP) to yield chorismate, which is the branch point compound that serves as the starting substrate for the three terminal pathways of aromatic amino acid biosynthesis. This reaction introduces a second double bond into the aromatic ring system. This Klebsiella pneumoniae (strain 342) protein is Chorismate synthase.